The primary structure comprises 444 residues: MKLLLILLGALLAVLTIKRTSAVQGSNHLICYYDGTSYTREGLAKLTLNDLEPALQFCTHLVYGHAAINPSSNKLVSNNEKLDLDVGTGLYRTITGMKKKYPHLKVLLSVGGDKDEVDADNNKYLTLLESSNARIPFINSAHSMVKTYGFDGLELGWQFPKNKPKKVHGSIGKLWKGFKKIFTGDFIVDEKAEEHKEEFTALVRELKNALRPDGYILGLAVLPNVNSSLFYDVPAIVNNLDYVNLMAYDFQTPQRNPEMADFPAPIYELNERNPESNVNYQVQYWLQNHCPASKINVGIPSYGRAWKMTTDSGLTGLPPVSDADGPAAGGLQTQTEGLLSWPEVCAKLPNPANQHLKGADSPLRKVGDPTKRFGNYAYRSTDDKGENGIWVSYEDPDTAANKAAYVKTKGLGGVALVDLSFDDFRGACTGDKYPILRAIKFKFQ.

A signal peptide spans 1–22; that stretch reads MKLLLILLGALLAVLTIKRTSA. The GH18 domain maps to 27–444; it reads NHLICYYDGT…ILRAIKFKFQ (418 aa). A disulfide bridge links C31 with C58. The N-linked (GlcNAc...) asparagine glycan is linked to N226. A disulfide bridge connects residues C345 and C428.

This sequence belongs to the glycosyl hydrolase 18 family. IDGF subfamily. In terms of processing, glycosylated.

It is found in the secreted. Functionally, cooperates with insulin-like peptides to stimulate the proliferation, polarization and motility of imaginal disk cells. May act by stabilizing the binding of insulin-like peptides to its receptor through a simultaneous interaction with both molecules to form a multiprotein signaling complex. This chain is Chitinase-like protein Idgf4 (Idgf4), found in Glossina morsitans morsitans (Savannah tsetse fly).